The sequence spans 189 residues: GMP synthase [glutamine-hydrolyzing] subunit A (189 aa).

The Glutamine amidotransferase type-1 domain maps to 3–187 (RIDVIDNHGQ…LSVCDQQSVA (185 aa)). The Nucleophile role is filled by Cys-73. Residues His-161 and Glu-163 contribute to the active site.

As to quaternary structure, heterodimer composed of a glutamine amidotransferase subunit (A) and a GMP-binding subunit (B).

The catalysed reaction is XMP + L-glutamine + ATP + H2O = GMP + L-glutamate + AMP + diphosphate + 2 H(+). The protein operates within purine metabolism; GMP biosynthesis; GMP from XMP (L-Gln route): step 1/1. In terms of biological role, catalyzes the synthesis of GMP from XMP. In Haloarcula marismortui (strain ATCC 43049 / DSM 3752 / JCM 8966 / VKM B-1809) (Halobacterium marismortui), this protein is GMP synthase [glutamine-hydrolyzing] subunit A.